Reading from the N-terminus, the 125-residue chain is Small ribosomal subunit protein eS8 (125 aa).

Positions 1-23 (MQFQGRSRRKYTGAKLKSARGKR) are enriched in basic residues. A disordered region spans residues 1 to 34 (MQFQGRSRRKYTGAKLKSARGKRKFELGREPAAT).

This sequence belongs to the eukaryotic ribosomal protein eS8 family. As to quaternary structure, part of the 30S ribosomal subunit.

This is Small ribosomal subunit protein eS8 from Methanococcoides burtonii (strain DSM 6242 / NBRC 107633 / OCM 468 / ACE-M).